Reading from the N-terminus, the 687-residue chain is Glycine--tRNA ligase beta subunit (687 aa).

The protein belongs to the class-II aminoacyl-tRNA synthetase family. Tetramer of two alpha and two beta subunits.

The protein localises to the cytoplasm. It carries out the reaction tRNA(Gly) + glycine + ATP = glycyl-tRNA(Gly) + AMP + diphosphate. The chain is Glycine--tRNA ligase beta subunit from Ruegeria sp. (strain TM1040) (Silicibacter sp.).